Here is a 1098-residue protein sequence, read N- to C-terminus: Ran-binding protein 16 (1098 aa).

This sequence belongs to the exportin family. As to quaternary structure, binds to nucleoporins and the GTP-bound form of Ran.

The protein localises to the cytoplasm. Its subcellular location is the nucleus. In terms of biological role, may function as a nuclear transport receptor. In Drosophila melanogaster (Fruit fly), this protein is Ran-binding protein 16 (Ranbp16).